The sequence spans 86 residues: Large ribosomal subunit protein bL27 (86 aa).

The tract at residues 1 to 22 is disordered; the sequence is MATKKAGGSSRNGRDSAGRRLG.

It belongs to the bacterial ribosomal protein bL27 family.

The polypeptide is Large ribosomal subunit protein bL27 (Rickettsia bellii (strain RML369-C)).